Reading from the N-terminus, the 61-residue chain is Large ribosomal subunit protein uL30 (61 aa).

Belongs to the universal ribosomal protein uL30 family. In terms of assembly, part of the 50S ribosomal subunit.

The chain is Large ribosomal subunit protein uL30 from Exiguobacterium sp. (strain ATCC BAA-1283 / AT1b).